Reading from the N-terminus, the 384-residue chain is Chorismate synthase (384 aa).

NADP(+) contacts are provided by R39 and R45. Residues 130 to 132 (RSS), 248 to 249 (NA), G292, 307 to 311 (KPIPT), and R333 contribute to the FMN site.

Belongs to the chorismate synthase family. As to quaternary structure, homotetramer. The cofactor is FMNH2.

The catalysed reaction is 5-O-(1-carboxyvinyl)-3-phosphoshikimate = chorismate + phosphate. It participates in metabolic intermediate biosynthesis; chorismate biosynthesis; chorismate from D-erythrose 4-phosphate and phosphoenolpyruvate: step 7/7. In terms of biological role, catalyzes the anti-1,4-elimination of the C-3 phosphate and the C-6 proR hydrogen from 5-enolpyruvylshikimate-3-phosphate (EPSP) to yield chorismate, which is the branch point compound that serves as the starting substrate for the three terminal pathways of aromatic amino acid biosynthesis. This reaction introduces a second double bond into the aromatic ring system. The polypeptide is Chorismate synthase (Exiguobacterium sibiricum (strain DSM 17290 / CCUG 55495 / CIP 109462 / JCM 13490 / 255-15)).